Consider the following 393-residue polypeptide: Short-chain dehydrogenase/reductase family 42E member 1 (393 aa).

Tyr-152 functions as the Proton acceptor in the catalytic mechanism. Lys-156 serves as a coordination point for NAD(+). 2 helical membrane-spanning segments follow: residues 282–302 (LPLT…FILG) and 371–391 (GLLV…SVIL).

Belongs to the 3-beta-HSD family.

The protein resides in the membrane. This is Short-chain dehydrogenase/reductase family 42E member 1 (SDR42E1) from Macaca fascicularis (Crab-eating macaque).